The chain runs to 424 residues: MKFASKKNNQKNSSKNDERYRELDNLVQEGNGSRLGGGSCLGKCAHVFKLIFKEIKDNIFIYILSIIYLSVSVMNTIFAKRTLNKIGNYSFVTSETHNFICMIMFFIVYSLFGNKKGNSKERHRSFNLQFFAISMLDACSVILAFIGLTRTTGNIQSFVLQLSIPINMFFCFLILRYRYHLYNYLGAVIIVVTIALVEMKLSFETQEENSIIFNLVLISSLIPVCFSNMTREIVFKKYKIDILRLNAMVSFFQLFTSCLILPVYTLPFLKQLHLPYNEIWTNIKNGFACLFLGRNTVVENCGLGMAKLCDDCDGAWKTFALFSFFDICDNLITSYIIDKFSTMTYTIVSCIQGPALAIAYYFKFLAGDVVREPRLLDFVTLFGYLFGSIIYRVGNIILERKKMRNEENEDSEGELTNVDSIITQ.

The Cytoplasmic segment spans residues 1-49 (MKFASKKNNQKNSSKNDERYRELDNLVQEGNGSRLGGGSCLGKCAHVFK). Residues 50–58 (LIFKEIKDN) lie within the membrane without spanning it. A helical membrane pass occupies residues 59-83 (IFIYILSIIYLSVSVMNTIFAKRTL). Topologically, residues 84 to 89 (NKIGNY) are vacuolar. Residues 90 to 111 (SFVTSETHNFICMIMFFIVYSL) form a helical membrane-spanning segment. The Cytoplasmic portion of the chain corresponds to 112-126 (FGNKKGNSKERHRSF). A helical transmembrane segment spans residues 127–147 (NLQFFAISMLDACSVILAFIG). Over 148-152 (LTRTT) the chain is Vacuolar. A helical membrane pass occupies residues 153-173 (GNIQSFVLQLSIPINMFFCFL). The Cytoplasmic segment spans residues 174-180 (ILRYRYH). The chain crosses the membrane as a helical span at residues 181-202 (LYNYLGAVIIVVTIALVEMKLS). At 203–210 (FETQEENS) the chain is on the vacuolar side. A helical membrane pass occupies residues 211–236 (IIFNLVLISSLIPVCFSNMTREIVFK). The Cytoplasmic segment spans residues 237 to 241 (KYKID). The helical transmembrane segment at 242-263 (ILRLNAMVSFFQLFTSCLILPV) threads the bilayer. Residues 264 to 279 (YTLPFLKQLHLPYNEI) lie on the Vacuolar side of the membrane. The stretch at 280–292 (WTNIKNGFACLFL) is an intramembrane region. Intrachain disulfides connect C289–C312 and C301–C309. Over 293 to 314 (GRNTVVENCGLGMAKLCDDCDG) the chain is Vacuolar. Residues 315–339 (AWKTFALFSFFDICDNLITSYIIDK) form a helical membrane-spanning segment. The Cytoplasmic segment spans residues 340-343 (FSTM). The helical transmembrane segment at 344 to 361 (TYTIVSCIQGPALAIAYY) threads the bilayer. Residues 362-374 (FKFLAGDVVREPR) are Vacuolar-facing. A helical membrane pass occupies residues 375–397 (LLDFVTLFGYLFGSIIYRVGNII). The Cytoplasmic segment spans residues 398–424 (LERKKMRNEENEDSEGELTNVDSIITQ).

Belongs to the CRT-like transporter family. As to quaternary structure, monomer.

The protein resides in the membrane. It localises to the vacuole membrane. It carries out the reaction L-arginine(in) = L-arginine(out). It catalyses the reaction L-lysine(in) = L-lysine(out). The enzyme catalyses L-histidine(out) = L-histidine(in). The catalysed reaction is Fe(3+)(in) = Fe(3+)(out). It carries out the reaction Fe(2+)(in) = Fe(2+)(out). Its function is as follows. Nutrient transporter. Substrate transport is pH-dependent. Can transport arginine, lysine, histidine and peptides. Involved in maintaining the osmotic homeostasis of the digestive vacuole. Required for the normal asexual intraerythrocytic proliferation of parasites. Can transport Fe(2+) and Fe(3+). The polypeptide is Chloroquine resistance transporter (Plasmodium falciparum (isolate 7G8)).